A 438-amino-acid chain; its full sequence is (S)-3,5-dihydroxyphenylglycine transaminase (438 aa).

An N6-(pyridoxal phosphate)lysine modification is found at Lys-266.

It belongs to the class-I pyridoxal-phosphate-dependent aminotransferase family. It depends on pyridoxal 5'-phosphate as a cofactor.

The catalysed reaction is (S)-3,5-dihydroxyphenylglycine + 2-oxoglutarate = 2-(3,5-dihydroxyphenyl)-2-oxoacetate + L-glutamate. Its pathway is antibiotic biosynthesis; vancomycin biosynthesis. Functionally, catalyzes the transamination of p-hydroxybenzoylformate to L-p-hydroxyphenylglycine as part of the biosynthesis of the (S)-3,5-dihydroxyphenylglycine constituent of the glycopeptide antibiotic chloroeremomycin, a member of the vancomycin group of antibiotics. The chain is (S)-3,5-dihydroxyphenylglycine transaminase (hpgT) from Amycolatopsis orientalis (Nocardia orientalis).